Consider the following 304-residue polypeptide: Nod factor export ATP-binding protein I (304 aa).

One can recognise an ABC transporter domain in the interval 6 to 236 (IDLAGVKKSF…HIGCQVIEIF (231 aa)). 38–45 (GPNGAGKS) lines the ATP pocket.

The protein belongs to the ABC transporter superfamily. Lipooligosaccharide exporter (TC 3.A.1.102) family. As to quaternary structure, the complex is composed of two ATP-binding proteins (NodI) and two transmembrane proteins (NodJ).

Its subcellular location is the cell inner membrane. Its function is as follows. Part of the ABC transporter complex NodIJ involved in the export of the nodulation factors (Nod factors), the bacterial signal molecules that induce symbiosis and subsequent nodulation induction. Nod factors are LCO (lipo-chitin oligosaccharide), a modified beta-1,4-linked N-acetylglucosamine oligosaccharide. This subunit is responsible for energy coupling to the transport system. The sequence is that of Nod factor export ATP-binding protein I from Rhizobium sp. (strain N33).